A 31-amino-acid chain; its full sequence is Cyclopsychotride-A (31 aa).

Positions 1-31 form a cross-link, cyclopeptide (Ser-Asn); it reads SIPCGESCVFIPCTVTALLGCSCKSKVCYKN. 3 disulfide bridges follow: C4-C21, C8-C23, and C13-C28.

The protein belongs to the cyclotide family. Bracelet subfamily. In terms of processing, this is a cyclic peptide.

Functionally, probably participates in a plant defense mechanism. Has antibiotic activity. Inhibits the cytopathic effects and replication of the human immunodeficiency virus. Active against both Gram-positive and Gram-negative bacteria. The protein is Cyclopsychotride-A of Psychotria longipes.